Reading from the N-terminus, the 331-residue chain is N-acetyl-alpha-D-glucosaminyl-diphospho-ditrans,octacis-undecaprenol 4-epimerase (331 aa).

Residues Phe-13–Val-14, Gln-34–Tyr-39, Asp-47–Val-48, Ser-109, Tyr-132, and Lys-136 each bind NAD(+). Substrate contacts are provided by Ser-109 and Tyr-132. The active-site Proton acceptor is Tyr-132. Substrate contacts are provided by residues Gly-183 to Lys-184 and Tyr-199 to Gly-201.

The protein belongs to the NAD(P)-dependent epimerase/dehydratase family. Requires NAD(+) as cofactor.

The protein resides in the cell membrane. The enzyme catalyses N-acetyl-alpha-D-glucosaminyl-di-trans,octa-cis-undecaprenyl diphosphate = N-acetyl-alpha-D-galactosaminyl-di-trans,octa-cis-undecaprenyl diphosphate. Its pathway is bacterial outer membrane biogenesis; LPS O-antigen biosynthesis. Its function is as follows. Involved in biosynthesis of the repeating tetrasaccharide unit of the O-antigen. Catalyzes the reversible epimerization of the hydroxyl group at position C4 of undecaprenyl pyrophosphate-N-acetylglucosamine (UndPP-GlcNAc) to yield undecaprenyl pyrophosphate-N-acetylgalactosamine (UndPP-GalNAc). The protein is N-acetyl-alpha-D-glucosaminyl-diphospho-ditrans,octacis-undecaprenol 4-epimerase of Escherichia coli O157:H7.